A 183-amino-acid polypeptide reads, in one-letter code: Ribosome-recycling factor (183 aa).

It belongs to the RRF family.

The protein resides in the cytoplasm. Functionally, responsible for the release of ribosomes from messenger RNA at the termination of protein biosynthesis. May increase the efficiency of translation by recycling ribosomes from one round of translation to another. This Christiangramia forsetii (strain DSM 17595 / CGMCC 1.15422 / KT0803) (Gramella forsetii) protein is Ribosome-recycling factor.